Here is a 368-residue protein sequence, read N- to C-terminus: WAT1-related protein At5g40240 (368 aa).

10 helical membrane-spanning segments follow: residues 18–38 (VVPFAAMFAVECATVGSNTLF), 50–70 (VFVFYSYIVSTLLLLPLSVIF), 82–102 (PLFFKIFLLGLVGFMSQIAGC), 111–131 (TLASAISNLTPAFTFTLAVIF), 142–162 (ATQAKIIGAILSISGALVVVL), 194–214 (WIIGGLLLASQYFLISVWYIL), 226–246 (ITVVFFYNLFATLISVPVCLF), 260–280 (ISLAAIIYSGVFVSLFSALTH), 292–312 (ISLFRPLSIAIAVAMGAIFLG), and 315–335 (LHLGSVIGSMILCIGFYTVIW). EamA domains are found at residues 33-161 (GSNT…LVVV) and 208-334 (ISVW…YTVI).

It belongs to the drug/metabolite transporter (DMT) superfamily. Plant drug/metabolite exporter (P-DME) (TC 2.A.7.4) family.

Its subcellular location is the membrane. The protein is WAT1-related protein At5g40240 of Arabidopsis thaliana (Mouse-ear cress).